We begin with the raw amino-acid sequence, 525 residues long: Ribosomal protein S6 kinase beta-1 (525 aa).

The TOS motif motif lies at 28–32 (FDIDL). Residues 32–46 (LDQPEDAGSEDELEE) are compositionally biased toward acidic residues. The disordered stretch occupies residues 32 to 54 (LDQPEDAGSEDELEEGGQLNESM). Positions 91–352 (FELLRVLGKG…AGEVQAHPFF (262 aa)) constitute a Protein kinase domain. ATP is bound by residues 97-105 (LGKGGYGKV) and Lys-123. The active-site Proton acceptor is the Asp-218. Position 252 is a phosphothreonine; by PDPK1 (Thr-252). Residues 353 to 423 (RHINWEELLA…VAPSVLESVK (71 aa)) enclose the AGC-kinase C-terminal domain. The interval 380 to 399 (SQFDSKFTRQTPVDSPDDST) is disordered. Residues 381–399 (QFDSKFTRQTPVDSPDDST) are compositionally biased toward polar residues. At Ser-394 the chain carries Phosphoserine. Thr-412 is subject to Phosphothreonine; by MTOR, NEK6 and NEK7. The tract at residues 424–525 (EKFSFEPKIR…KRPEHLRMNL (102 aa)) is autoinhibitory domain. A phosphoserine mark is found at Ser-434 and Ser-441. Thr-444 bears the Phosphothreonine mark. 2 positions are modified to phosphoserine: Ser-447 and Ser-452. Lys-516 is modified (N6-acetyllysine).

This sequence belongs to the protein kinase superfamily. AGC Ser/Thr protein kinase family. S6 kinase subfamily. As to quaternary structure, interacts with PPP1R9A/neurabin-1. Interacts with RPTOR. Interacts with IRS1. Interacts with EIF3B and EIF3C. Interacts with TRAF4. Interacts with POLDIP3. Interacts (via N-terminus) with IER5. Post-translationally, phosphorylation at Thr-412 is regulated by mTORC1. The phosphorylation at this site is maintained by an agonist-dependent autophosphorylation mechanism. Activated by phosphorylation at Thr-252 by PDPK1. Dephosphorylation by PPP1CC at Thr-412 in mitochondrion.

It is found in the cytoplasm. The protein localises to the synapse. It localises to the synaptosome. Its subcellular location is the mitochondrion outer membrane. The protein resides in the mitochondrion. The enzyme catalyses L-seryl-[protein] + ATP = O-phospho-L-seryl-[protein] + ADP + H(+). The catalysed reaction is L-threonyl-[protein] + ATP = O-phospho-L-threonyl-[protein] + ADP + H(+). With respect to regulation, activation requires multiple phosphorylation events on serine/threonine residues. Activation appears to be first mediated by phosphorylation of multiple sites in the autoinhibitory domain, which facilitates phosphorylation at Thr-412, disrupting the autoinhibitory mechanism and allowing phosphorylation of Thr-252 by PDPK1. The active conformation of the kinase is believed to be stabilized by a mechanism involving three conserved phosphorylation sites located in the kinase domain activation loop (Thr-252) and in the AGC-kinase C-terminal domain (Ser-394 in the middle of the tail/linker region and Thr-412 within a hydrophobic motif at its end). Activated by mTORC1; isoform Alpha I and isoform Alpha II are sensitive to rapamycin, which inhibits activating phosphorylation at Thr-412. Activated by PDPK1. In terms of biological role, serine/threonine-protein kinase that acts downstream of mTOR signaling in response to growth factors and nutrients to promote cell proliferation, cell growth and cell cycle progression. Regulates protein synthesis through phosphorylation of EIF4B, RPS6 and EEF2K, and contributes to cell survival by repressing the pro-apoptotic function of BAD. Under conditions of nutrient depletion, the inactive form associates with the EIF3 translation initiation complex. Upon mitogenic stimulation, phosphorylation by the mechanistic target of rapamycin complex 1 (mTORC1) leads to dissociation from the EIF3 complex and activation. The active form then phosphorylates and activates several substrates in the pre-initiation complex, including the EIF2B complex and the cap-binding complex component EIF4B. Also controls translation initiation by phosphorylating a negative regulator of EIF4A, PDCD4, targeting it for ubiquitination and subsequent proteolysis. Promotes initiation of the pioneer round of protein synthesis by phosphorylating POLDIP3/SKAR. In response to IGF1, activates translation elongation by phosphorylating EEF2 kinase (EEF2K), which leads to its inhibition and thus activation of EEF2. Also plays a role in feedback regulation of mTORC2 by mTORC1 by phosphorylating MAPKAP1/SIN1, MTOR and RICTOR, resulting in the inhibition of mTORC2 and AKT1 signaling. Also involved in feedback regulation of mTORC1 and mTORC2 by phosphorylating DEPTOR. Mediates cell survival by phosphorylating the pro-apoptotic protein BAD and suppressing its pro-apoptotic function. Phosphorylates mitochondrial URI1 leading to dissociation of a URI1-PPP1CC complex. The free mitochondrial PPP1CC can then dephosphorylate RPS6KB1 at Thr-412, which is proposed to be a negative feedback mechanism for the RPS6KB1 anti-apoptotic function. Mediates TNF-alpha-induced insulin resistance by phosphorylating IRS1 at multiple serine residues, resulting in accelerated degradation of IRS1. In cells lacking functional TSC1-2 complex, constitutively phosphorylates and inhibits GSK3B. May be involved in cytoskeletal rearrangement through binding to neurabin. Phosphorylates and activates the pyrimidine biosynthesis enzyme CAD, downstream of MTOR. Following activation by mTORC1, phosphorylates EPRS and thereby plays a key role in fatty acid uptake by adipocytes and also most probably in interferon-gamma-induced translation inhibition. The sequence is that of Ribosomal protein S6 kinase beta-1 (Rps6kb1) from Mus musculus (Mouse).